The sequence spans 190 residues: MGGTFDPVHNGHLVAASEVAALFDLDEVVFVPSGQPWQKVHRVVSDPEDRYLMTFLATAENPQFTVSRVEIDRGGATYTIDTLRDLRGARPDDELFFITGADALAQIFTWRDHRELFELAHFVGVSRPGYQLALDAALPANSVSLLEVPALAISSSDIRQRVGRGAPIWYLTPDGVVRYIAKRHLYQSRA.

The protein belongs to the NadD family.

It carries out the reaction nicotinate beta-D-ribonucleotide + ATP + H(+) = deamido-NAD(+) + diphosphate. The protein operates within cofactor biosynthesis; NAD(+) biosynthesis; deamido-NAD(+) from nicotinate D-ribonucleotide: step 1/1. Its function is as follows. Catalyzes the reversible adenylation of nicotinate mononucleotide (NaMN) to nicotinic acid adenine dinucleotide (NaAD). The protein is Probable nicotinate-nucleotide adenylyltransferase of Frankia alni (strain DSM 45986 / CECT 9034 / ACN14a).